Here is an 881-residue protein sequence, read N- to C-terminus: Probable alpha/beta-glucosidase agdC (881 aa).

Residues 1–14 (MLRSLLLLAPLVGA) form the signal peptide. 3 N-linked (GlcNAc...) asparagine glycosylation sites follow: Asn-171, Asn-293, and Asn-373. Asp-422 (nucleophile) is an active-site residue. Residue Glu-425 is part of the active site. The interval 440-485 (YSRDNDLPPAAPPVRPSNPRPLPGFPGDFQPSSSSKRSTKGSKVGL) is disordered. Residues 448–463 (PAAPPVRPSNPRPLPG) are compositionally biased toward pro residues. Asn-506 carries an N-linked (GlcNAc...) asparagine glycan. Asp-571 functions as the Proton donor in the catalytic mechanism. 3 N-linked (GlcNAc...) asparagine glycosylation sites follow: Asn-572, Asn-608, and Asn-742.

This sequence belongs to the glycosyl hydrolase 31 family.

It is found in the secreted. It carries out the reaction Hydrolysis of terminal, non-reducing (1-&gt;4)-linked alpha-D-glucose residues with release of alpha-D-glucose.. The catalysed reaction is Hydrolysis of terminal, non-reducing beta-D-glucosyl residues with release of beta-D-glucose.. In terms of biological role, glucosidase involved in the degradation of cellulosic biomass. Has both alpha- and beta-glucosidase activity. This Neosartorya fischeri (strain ATCC 1020 / DSM 3700 / CBS 544.65 / FGSC A1164 / JCM 1740 / NRRL 181 / WB 181) (Aspergillus fischerianus) protein is Probable alpha/beta-glucosidase agdC (agdC).